The sequence spans 215 residues: Probable GTP-binding protein EngB (215 aa).

The 175-residue stretch at 30–204 (EGLEVAFAGR…QMVLAQWLGL (175 aa)) folds into the EngB-type G domain. Residues 38–45 (GRSNAGKS), 64–68 (GRTQL), 82–85 (DLPG), 149–152 (TKAD), and 182–185 (LFSA) each bind GTP. Residues Ser45 and Thr66 each coordinate Mg(2+).

This sequence belongs to the TRAFAC class TrmE-Era-EngA-EngB-Septin-like GTPase superfamily. EngB GTPase family. It depends on Mg(2+) as a cofactor.

Necessary for normal cell division and for the maintenance of normal septation. The polypeptide is Probable GTP-binding protein EngB (Pseudomonas aeruginosa (strain ATCC 15692 / DSM 22644 / CIP 104116 / JCM 14847 / LMG 12228 / 1C / PRS 101 / PAO1)).